The chain runs to 416 residues: Exodeoxyribonuclease 7 large subunit (416 aa).

It belongs to the XseA family. In terms of assembly, heterooligomer composed of large and small subunits.

The protein localises to the cytoplasm. It catalyses the reaction Exonucleolytic cleavage in either 5'- to 3'- or 3'- to 5'-direction to yield nucleoside 5'-phosphates.. In terms of biological role, bidirectionally degrades single-stranded DNA into large acid-insoluble oligonucleotides, which are then degraded further into small acid-soluble oligonucleotides. This Sulfurimonas denitrificans (strain ATCC 33889 / DSM 1251) (Thiomicrospira denitrificans (strain ATCC 33889 / DSM 1251)) protein is Exodeoxyribonuclease 7 large subunit.